The chain runs to 430 residues: Replication factor C large subunit (430 aa).

75–82 (GPPGTGKT) lines the ATP pocket.

The protein belongs to the activator 1 small subunits family. RfcL subfamily. As to quaternary structure, heteromultimer composed of small subunits (RfcS) and large subunits (RfcL).

In terms of biological role, part of the RFC clamp loader complex which loads the PCNA sliding clamp onto DNA. This is Replication factor C large subunit from Nanoarchaeum equitans (strain Kin4-M).